A 233-amino-acid chain; its full sequence is Small ribosomal subunit protein uS3 (233 aa).

The 69-residue stretch at 39–107 (VRTFLTKELK…PAQINISEVR (69 aa)) folds into the KH type-2 domain.

The protein belongs to the universal ribosomal protein uS3 family. In terms of assembly, part of the 30S ribosomal subunit. Forms a tight complex with proteins S10 and S14.

Binds the lower part of the 30S subunit head. Binds mRNA in the 70S ribosome, positioning it for translation. The chain is Small ribosomal subunit protein uS3 from Pseudoalteromonas translucida (strain TAC 125).